Here is a 305-residue protein sequence, read N- to C-terminus: Probable 2-methylisocitrate lyase 1 (305 aa).

52–54 (SGA) contributes to the substrate binding site. Residues Asp-91 and Asp-93 each contribute to the Mg(2+) site. Substrate contacts are provided by residues 128-129 (CG), Arg-163, Glu-193, 216-218 (NMT), Arg-247, and Arg-276.

Belongs to the isocitrate lyase/PEP mutase superfamily. Methylisocitrate lyase family. In terms of assembly, homotetramer; dimer of dimers. Mg(2+) is required as a cofactor.

It carries out the reaction (2S,3R)-3-hydroxybutane-1,2,3-tricarboxylate = pyruvate + succinate. Catalyzes the thermodynamically favored C-C bond cleavage of (2R,3S)-2-methylisocitrate to yield pyruvate and succinate via an alpha-carboxy-carbanion intermediate. This is Probable 2-methylisocitrate lyase 1 from Corynebacterium glutamicum (strain ATCC 13032 / DSM 20300 / JCM 1318 / BCRC 11384 / CCUG 27702 / LMG 3730 / NBRC 12168 / NCIMB 10025 / NRRL B-2784 / 534).